A 260-amino-acid polypeptide reads, in one-letter code: Proteasome subunit alpha (260 aa).

Belongs to the peptidase T1A family. As to quaternary structure, the 20S proteasome core is composed of 14 alpha and 14 beta subunits that assemble into four stacked heptameric rings, resulting in a barrel-shaped structure. The two inner rings, each composed of seven catalytic beta subunits, are sandwiched by two outer rings, each composed of seven alpha subunits. The catalytic chamber with the active sites is on the inside of the barrel. Has a gated structure, the ends of the cylinder being occluded by the N-termini of the alpha-subunits. Is capped at one or both ends by the proteasome regulatory ATPase, PAN.

The protein resides in the cytoplasm. With respect to regulation, the formation of the proteasomal ATPase PAN-20S proteasome complex, via the docking of the C-termini of PAN into the intersubunit pockets in the alpha-rings, triggers opening of the gate for substrate entry. Interconversion between the open-gate and close-gate conformations leads to a dynamic regulation of the 20S proteasome proteolysis activity. In terms of biological role, component of the proteasome core, a large protease complex with broad specificity involved in protein degradation. In Thermococcus gammatolerans (strain DSM 15229 / JCM 11827 / EJ3), this protein is Proteasome subunit alpha.